A 141-amino-acid chain; its full sequence is Nucleoside diphosphate kinase (141 aa).

The ATP site is built by Lys-11, Phe-59, Arg-87, Thr-93, Arg-104, and Asn-114. Catalysis depends on His-117, which acts as the Pros-phosphohistidine intermediate.

This sequence belongs to the NDK family. As to quaternary structure, homotetramer. Requires Mg(2+) as cofactor.

The protein resides in the cytoplasm. The enzyme catalyses a 2'-deoxyribonucleoside 5'-diphosphate + ATP = a 2'-deoxyribonucleoside 5'-triphosphate + ADP. It carries out the reaction a ribonucleoside 5'-diphosphate + ATP = a ribonucleoside 5'-triphosphate + ADP. In terms of biological role, major role in the synthesis of nucleoside triphosphates other than ATP. The ATP gamma phosphate is transferred to the NDP beta phosphate via a ping-pong mechanism, using a phosphorylated active-site intermediate. The sequence is that of Nucleoside diphosphate kinase from Cupriavidus necator (strain ATCC 17699 / DSM 428 / KCTC 22496 / NCIMB 10442 / H16 / Stanier 337) (Ralstonia eutropha).